We begin with the raw amino-acid sequence, 233 residues long: LexA repressor (233 aa).

The segment at residues 26 to 46 is a DNA-binding region (H-T-H motif); sequence FDEMKEALDLRSKSGIHRLIT. Catalysis depends on for autocatalytic cleavage activity residues S154 and K192.

This sequence belongs to the peptidase S24 family. As to quaternary structure, homodimer.

The catalysed reaction is Hydrolysis of Ala-|-Gly bond in repressor LexA.. Represses a number of genes involved in the response to DNA damage (SOS response), including recA and lexA. In the presence of single-stranded DNA, RecA interacts with LexA causing an autocatalytic cleavage which disrupts the DNA-binding part of LexA, leading to derepression of the SOS regulon and eventually DNA repair. In Roseobacter denitrificans (strain ATCC 33942 / OCh 114) (Erythrobacter sp. (strain OCh 114)), this protein is LexA repressor.